Here is a 1321-residue protein sequence, read N- to C-terminus: Serine/threonine-protein kinase SIK3 (1321 aa).

A disordered region spans residues 1–59 (MAAAAASGAGGAAGAGTGGAGPAGRLLPPPAPGSPAAPAAVSPAAGQPRPPAPASRGPM). Gly residues predominate over residues 8 to 22 (GAGGAAGAGTGGAGP). The span at 36-47 (AAPAAVSPAAGQ) shows a compositional bias: low complexity. In terms of domain architecture, Protein kinase spans 66 to 317 (YEIDRTIGKG…MEQICKHKWM (252 aa)). Thr71 carries the post-translational modification Phosphothreonine. Residues 72–80 (IGKGNFAVV) and Lys95 contribute to the ATP site. Glu113 carries the post-translational modification Phosphothreonine. Asp188 serves as the catalytic Proton acceptor. At Thr221 the chain carries Phosphothreonine; by LKB1. One can recognise a UBA domain in the interval 344–384 (PLNEDVLLAMEDMGLDKEQTLQSLRSDAYDHYSAIYSLLCD). The residue at position 469 (Thr469) is a Phosphothreonine. Ser551, Ser591, and Ser592 each carry phosphoserine. The disordered stretch occupies residues 585 to 614 (TPVDEESSDGEPDQEAVQSSTYKDSNTLHL). Acidic residues predominate over residues 587–598 (VDEESSDGEPDQ). Polar residues predominate over residues 600 to 613 (AVQSSTYKDSNTLH). Phosphoserine occurs at positions 626 and 647. The interval 727-772 (IQPSSPPPNHPNNHLFRQPSNSPPPMSSAMIQPHGAASSSQFQGLP) is disordered. Residues 763 to 772 (ASSSQFQGLP) show a composition bias toward polar residues. The residue at position 866 (Ser866) is a Phosphoserine. The tract at residues 894 to 945 (LFSDQSRGSPSSYSPSTGVGFSPTQALKVPPLDQFPTFPPSAHQQPPHYTTS) is disordered. A compositionally biased stretch (low complexity) spans 896–909 (SDQSRGSPSSYSPS). Residues 935 to 945 (AHQQPPHYTTS) show a composition bias toward polar residues. Ser978 is subject to Phosphoserine. An Omega-N-methylarginine modification is found at Arg986. Over residues 1256–1265 (SLMGSQQFQD) the composition is skewed to polar residues. Positions 1256–1289 (SLMGSQQFQDGENEECGASLGGHEHPDLSDGSQH) are disordered.

This sequence belongs to the protein kinase superfamily. CAMK Ser/Thr protein kinase family. SNF1 subfamily. Binds to and is activated by YWHAZ when phosphorylated on Thr-221. Interacts with 14-3-3 proteins. Interacts with HDAC4; this interaction leads to HDAC4 retention in the cytoplasm. Interacts with DEPTOR, MLST8/GbetaL, RICTOR and RPTOR. Mg(2+) is required as a cofactor. Phosphorylated at Thr-221 by STK11/LKB1 in complex with STE20-related adapter-alpha (STRADA) pseudo kinase and CAB39. Phosphorylation at Thr-221 is inhibited in response to PTHLH/PTHrP. Phosphorylated at Thr-469 and Ser-551 in response to cAMP signaling. Expressed in chondrocytes.

The protein localises to the cytoplasm. It carries out the reaction L-seryl-[protein] + ATP = O-phospho-L-seryl-[protein] + ADP + H(+). It catalyses the reaction L-threonyl-[protein] + ATP = O-phospho-L-threonyl-[protein] + ADP + H(+). Activated by phosphorylation on Thr-221. Functionally, positive regulator of mTOR signaling that functions by triggering the degradation of DEPTOR, an mTOR inhibitor. Involved in the dynamic regulation of mTOR signaling in chondrocyte differentiation during skeletogenesis. Negatively regulates cAMP signaling pathway possibly by acting on CRTC2/TORC2 and CRTC3/TORC3. Prevents HDAC4 translocation to the nucleus. In Homo sapiens (Human), this protein is Serine/threonine-protein kinase SIK3.